Consider the following 250-residue polypeptide: Isoprenyl transferase (250 aa).

D26 is a catalytic residue. D26 is a Mg(2+) binding site. Residues 27 to 30, W31, R39, H43, and 71 to 73 contribute to the substrate site; these read GNGR and STE. N74 serves as the catalytic Proton acceptor. Substrate is bound by residues W75, R77, R198, and 204–206; that span reads RLS. E217 is a binding site for Mg(2+).

This sequence belongs to the UPP synthase family. In terms of assembly, homodimer. Requires Mg(2+) as cofactor.

Functionally, catalyzes the condensation of isopentenyl diphosphate (IPP) with allylic pyrophosphates generating different type of terpenoids. The polypeptide is Isoprenyl transferase (Streptococcus agalactiae serotype III (strain NEM316)).